The following is a 480-amino-acid chain: Gasdermin-C2 (480 aa).

A triggers pyroptosis region spans residues 1–226; sequence MGYSFDRASK…TCVILPSATK (226 aa).

Belongs to the gasdermin family. In terms of assembly, homooligomer; homooligomeric ring-shaped pore complex containing 27-28 subunits when inserted in the membrane. Post-translationally, cleavage by CASP8 relieves autoinhibition by releasing the N-terminal moiety (Gasdermin-C2, N-terminal) that initiates pyroptosis. Palmitoylated.

The protein resides in the cytoplasm. It is found in the cytosol. Its subcellular location is the cell membrane. The full-length protein before cleavage is inactive: intramolecular interactions between N- and C-terminal domains mediate autoinhibition in the absence of activation signal. The intrinsic pyroptosis-inducing activity is carried by the released N-terminal moiety (Gasdermin-C2, N-terminal) following cleavage by caspase CASP8 in response to type-2 immunity following worm infection. In terms of biological role, this form constitutes the precursor of the pore-forming protein: upon cleavage, the released N-terminal moiety (Gasdermin-C2, N-terminal) binds to membranes and forms pores, triggering pyroptosis. Functionally, pore-forming protein that causes membrane permeabilization and pyroptosis in response to type-2 immunity. Produced by the cleavage of gasdermin-C2 in response to type-2 immunity following worm infection. After cleavage, moves to the plasma membrane where it strongly binds to membrane inner leaflet lipids. Homooligomerizes within the membrane and forms pores of 10-15 nanometers (nm) of inner diameter, triggering pyroptosis and lytic cell death in enterocytes. The chain is Gasdermin-C2 from Mus musculus (Mouse).